The following is a 540-amino-acid chain: 2,3-bisphosphoglycerate-independent phosphoglycerate mutase (540 aa).

The Mn(2+) site is built by Asp-13 and Ser-63. The active-site Phosphoserine intermediate is Ser-63. Substrate is bound by residues His-124, 154–155 (RD), Arg-186, Arg-192, 262–265 (RPDR), and Lys-356. Asp-423, His-427, Asp-464, His-465, and His-483 together coordinate Mn(2+).

The protein belongs to the BPG-independent phosphoglycerate mutase family. As to quaternary structure, monomer. Mn(2+) is required as a cofactor.

The enzyme catalyses (2R)-2-phosphoglycerate = (2R)-3-phosphoglycerate. The protein operates within carbohydrate degradation; glycolysis; pyruvate from D-glyceraldehyde 3-phosphate: step 3/5. Functionally, catalyzes the interconversion of 2-phosphoglycerate and 3-phosphoglycerate. This is 2,3-bisphosphoglycerate-independent phosphoglycerate mutase from Chloroflexus aggregans (strain MD-66 / DSM 9485).